The chain runs to 449 residues: Deoxyguanosinetriphosphate triphosphohydrolase-like protein (449 aa).

The segment at 1–27 (MTSSVWQERRHGEDKQRRNDHRSPYQR) is disordered. Basic and acidic residues predominate over residues 7–27 (QERRHGEDKQRRNDHRSPYQR). The region spanning 59 to 255 (RLTHSLEVSQ…MELADDIAYA (197 aa)) is the HD domain.

Belongs to the dGTPase family. Type 2 subfamily.

The chain is Deoxyguanosinetriphosphate triphosphohydrolase-like protein from Shewanella baltica (strain OS223).